Consider the following 467-residue polypeptide: Argininosuccinate lyase 1 (467 aa).

The protein belongs to the lyase 1 family. Argininosuccinate lyase subfamily.

The protein resides in the cytoplasm. It carries out the reaction 2-(N(omega)-L-arginino)succinate = fumarate + L-arginine. The protein operates within amino-acid biosynthesis; L-arginine biosynthesis; L-arginine from L-ornithine and carbamoyl phosphate: step 3/3. The protein is Argininosuccinate lyase 1 of Rhizobium meliloti (strain 1021) (Ensifer meliloti).